The chain runs to 120 residues: UPF0231 protein KPN78578_01240 (120 aa).

Belongs to the UPF0231 family.

The protein is UPF0231 protein KPN78578_01240 of Klebsiella pneumoniae subsp. pneumoniae (strain ATCC 700721 / MGH 78578).